Consider the following 510-residue polypeptide: MIWHVQNENFILDSTRIFMKAFHLLLFHGSFIFPECILIFGLILLLMIDSTSDQKDIPWLYFISSTSLVMSITALLFRWREEPMISFSGNFQTNNFNEIFQFLILLCSTLCIPLSVEYIECTEMAITEFLLFVLTATLGGMFLCGANDLITIFVAPESFSLCSYLLSGYTKRDVRSNEATTKYLLMGGASSSILVHGFSWLYGSSGGEIELQEIVNGLINTQMYNSPGISIALISITVGIGFKLSPAPSHQWTPDVYEGSPTPVVAFLSVTSKVAASASATRIFDIPFYFSSNEWHLLLEILAILSMILGNLIAITQTSMKRMLAYSSIGQIGYVIIGIIVGDSNDGYASMITYMLFYISMNLGTFARIVSFGLRTGTDNIRDYAGLYTKDPFLALSSALCLLSLGGLPPLAGFFGKLHLFWCGWQAGLYFLVSIGLLTSVVSIYYYLKIIKLLMTGRNQEITPHVRNYRRSLLRSNNSIELSMIVCVIASTIPGISMNPIIAIAQDTLF.

Transmembrane regions (helical) follow at residues 24–44, 57–77, 99–119, 124–144, 183–203, 227–247, 295–315, 323–343, 347–367, 395–415, 418–438, and 484–504; these read LLLF…GLIL, IPWL…ALLF, IFQF…VEYI, MAIT…MFLC, YLLM…WLYG, PGIS…LSPA, WHLL…LIAI, MLAY…IVGD, GYAS…GTFA, ALSS…AGFF, LHLF…IGLL, and MIVC…IIAI.

It belongs to the complex I subunit 2 family. In terms of assembly, NDH is composed of at least 16 different subunits, 5 of which are encoded in the nucleus.

The protein resides in the plastid. It is found in the chloroplast thylakoid membrane. It carries out the reaction a plastoquinone + NADH + (n+1) H(+)(in) = a plastoquinol + NAD(+) + n H(+)(out). It catalyses the reaction a plastoquinone + NADPH + (n+1) H(+)(in) = a plastoquinol + NADP(+) + n H(+)(out). NDH shuttles electrons from NAD(P)H:plastoquinone, via FMN and iron-sulfur (Fe-S) centers, to quinones in the photosynthetic chain and possibly in a chloroplast respiratory chain. The immediate electron acceptor for the enzyme in this species is believed to be plastoquinone. Couples the redox reaction to proton translocation, and thus conserves the redox energy in a proton gradient. The sequence is that of NAD(P)H-quinone oxidoreductase subunit 2 B, chloroplastic from Calycanthus floridus var. glaucus (Eastern sweetshrub).